The primary structure comprises 284 residues: 4-diphosphocytidyl-2-C-methyl-D-erythritol kinase (284 aa).

Lys-14 is an active-site residue. 98-108 (PMGGGLGGGSS) is a binding site for ATP. Asp-140 is a catalytic residue.

This sequence belongs to the GHMP kinase family. IspE subfamily.

It catalyses the reaction 4-CDP-2-C-methyl-D-erythritol + ATP = 4-CDP-2-C-methyl-D-erythritol 2-phosphate + ADP + H(+). Its pathway is isoprenoid biosynthesis; isopentenyl diphosphate biosynthesis via DXP pathway; isopentenyl diphosphate from 1-deoxy-D-xylulose 5-phosphate: step 3/6. Catalyzes the phosphorylation of the position 2 hydroxy group of 4-diphosphocytidyl-2C-methyl-D-erythritol. This Shewanella sp. (strain W3-18-1) protein is 4-diphosphocytidyl-2-C-methyl-D-erythritol kinase.